The following is a 314-amino-acid chain: tRNA pseudouridine synthase B (314 aa).

The active-site Nucleophile is D41.

This sequence belongs to the pseudouridine synthase TruB family. Type 1 subfamily.

It carries out the reaction uridine(55) in tRNA = pseudouridine(55) in tRNA. Its function is as follows. Responsible for synthesis of pseudouridine from uracil-55 in the psi GC loop of transfer RNAs. The chain is tRNA pseudouridine synthase B from Prochlorococcus marinus (strain NATL2A).